A 111-amino-acid polypeptide reads, in one-letter code: Disintegrin subunit alpha (111 aa).

Residues 1–20 (MIQVLLVTICLAVFPYQGSS) form the signal peptide. A propeptide spanning residues 21–44 (IILESGNVNDYEVVYPRKITPLPK) is cleaved from the precursor. A Disintegrin domain is found at 45–111 (GAVQPKNPCC…GDCPRKHFYA (67 aa)). Disulfide bonds link C53–C76, C67–C73, C72–C97, and C85–C104. Positions 89–91 (RGD) match the Cell attachment site motif. A propeptide spanning residues 110-111 (YA) is cleaved from the precursor.

This sequence belongs to the disintegrin family. Dimeric disintegrin subfamily. Heterodimer with subunit beta; disulfide-linked. Expressed by the venom gland.

The protein resides in the secreted. In terms of biological role, acts by binding to alpha-IIb/beta-3 (ITGA2B/ITGB3) on the platelet surface and inhibits both ADP-induced platelet aggregation and platelet aggregate dissociation in human platelet-rich plasma. This Agkistrodon piscivorus leucostoma (Western cottonmouth) protein is Disintegrin subunit alpha.